Reading from the N-terminus, the 611-residue chain is UvrABC system protein C (611 aa).

The GIY-YIG domain maps to 6 to 84; that stretch reads NNPGVYRMFN…IKRSRPRFNV (79 aa). Residues 194 to 229 enclose the UVR domain; sequence QSVKDHLAAAMQAASADLDFEHAAVYRDRLAALSHV.

Belongs to the UvrC family. Interacts with UvrB in an incision complex.

It is found in the cytoplasm. Its function is as follows. The UvrABC repair system catalyzes the recognition and processing of DNA lesions. UvrC both incises the 5' and 3' sides of the lesion. The N-terminal half is responsible for the 3' incision and the C-terminal half is responsible for the 5' incision. This chain is UvrABC system protein C, found in Brucella suis biovar 1 (strain 1330).